The following is a 328-amino-acid chain: Probable cell division protein WhiA (328 aa).

The H-T-H motif DNA-binding region spans serine 275–glutamate 308.

This sequence belongs to the WhiA family.

Functionally, involved in cell division and chromosome segregation. In Corynebacterium jeikeium (strain K411), this protein is Probable cell division protein WhiA.